Consider the following 249-residue polypeptide: Probable transcriptional regulatory protein Tgr7_2237 (249 aa).

This sequence belongs to the TACO1 family.

It localises to the cytoplasm. The chain is Probable transcriptional regulatory protein Tgr7_2237 from Thioalkalivibrio sulfidiphilus (strain HL-EbGR7).